Consider the following 71-residue polypeptide: Serine palmitoyltransferase small subunit A (71 aa).

Residues Met-1–Gln-12 are Cytoplasmic-facing. Residues Met-13–Leu-29 form a helical membrane-spanning segment. Residues Glu-30 to Arg-34 are Lumenal-facing. A helical membrane pass occupies residues Thr-35–Pro-57. Residues Gln-58–Gln-71 are Cytoplasmic-facing.

This sequence belongs to the SPTSS family. SPTSSA subfamily. Component of the serine palmitoyltransferase (SPT) complex, which is composed of SPTLC1, SPTLC2 or SPTLC3 and SPTSSA or SPTSSB. The heterodimer consisting of SPTLC1 and SPTLC2/SPTLC3 forms the catalytic core of the enzyme, while SPTSSA or SPTSSB subunits determine substrate specificity. SPT also interacts with ORMDL proteins, especially ORMDL3, which negatively regulate SPT activity in the presence of ceramides. Interacts with MBOAT7; the interaction plays a role in MBOAT7 localization to mitochondria-associated membranes.

Its subcellular location is the endoplasmic reticulum membrane. Its pathway is lipid metabolism; sphingolipid metabolism. Its function is as follows. Component of the serine palmitoyltransferase multisubunit enzyme (SPT) that catalyzes the initial and rate-limiting step in sphingolipid biosynthesis by condensing L-serine and activated acyl-CoA (most commonly palmitoyl-CoA) to form long-chain bases. The SPT complex is composed of SPTLC1, SPTLC2 or SPTLC3 and SPTSSA or SPTSSB. Within this complex, the heterodimer consisting of SPTLC1 and SPTLC2/SPTLC3 forms the catalytic core. Within the SPT complex, SPTSSA stimulates the catalytic activity and plays a role in substrate specificity, which depends upon the overall complex composition. The SPTLC1-SPTLC2-SPTSSA complex shows a strong preference for C16-CoA substrate, while the SPTLC1-SPTLC3-SPTSSA isozyme uses both C14-CoA and C16-CoA as substrates, with a slight preference for C14-CoA. Independently of its action as a SPT component, may be involved in MBOAT7 localization to mitochondria-associated membranes, a membrane bridge between the endoplasmic reticulum and mitochondria, may hence affect MBOAT7-catalyzed incorporation of arachidonic acid into phosphatidylinositol. This is Serine palmitoyltransferase small subunit A from Homo sapiens (Human).